The sequence spans 557 residues: Carotenoid-cleaving dioxygenase, mitochondrial (557 aa).

Residues H203, H263, H334, and H551 each coordinate Fe cation.

It belongs to the carotenoid oxygenase family. Fe(2+) is required as a cofactor.

Its subcellular location is the mitochondrion. It catalyses the reaction all-trans-beta-carotene + O2 = beta-ionone + all-trans-10'-apo-beta-carotenal. The catalysed reaction is 5-cis-lycopene + O2 = 5-cis-10'-apo-lycopenal + (3E,5E)-6,10-dimethylundeca-3,5,9-trien-2-one. It carries out the reaction 13-cis-lycopene + O2 = 13-cis-10'-apo-lycopenal + (3E,5E)-6,10-dimethylundeca-3,5,9-trien-2-one. The enzyme catalyses lutein + O2 = (3R,6R)-hydroxy-alpha-ionone + (3R)-3-hydroxy-10'-apo-beta-carotenal. It catalyses the reaction lutein + O2 = (3R,6R)-3-hydroxy-10'-apo-alpha-carotenal + (3R)-hydroxy-beta-ionone. The catalysed reaction is all-trans-zeaxanthin + 2 O2 = 4,9-dimethyldodeca-2,4,6,8,10-pentaenedial + 2 (3R)-hydroxy-beta-ionone. It carries out the reaction all-trans-zeaxanthin + O2 = (3R)-3-hydroxy-10'-apo-beta-carotenal + (3R)-hydroxy-beta-ionone. The enzyme catalyses beta-cryptoxanthin + O2 = all-trans-10'-apo-beta-carotenal + (3R)-hydroxy-beta-ionone. It catalyses the reaction all-trans-10'-apo-beta-carotenal + O2 = beta-ionone + 4,9-dimethyldodeca-2,4,6,8,10-pentaenedial. The catalysed reaction is (3R)-3-hydroxy-10'-apo-beta-carotenal + O2 = 4,9-dimethyldodeca-2,4,6,8,10-pentaenedial + (3R)-hydroxy-beta-ionone. It carries out the reaction (3R,6R)-3-hydroxy-10'-apo-alpha-carotenal + O2 = (3R,6R)-hydroxy-alpha-ionone + 4,9-dimethyldodeca-2,4,6,8,10-pentaenedial. Its function is as follows. Broad specificity mitochondrial dioxygenase that mediates the asymmetric oxidative cleavage of carotenoids. Cleaves carotenes (pure hydrocarbon carotenoids) such as all-trans-beta-carotene and lycopene as well as xanthophylls (oxygenated carotenoids) such as zeaxanthin, lutein and beta-cryptoxanthin at both the 9,10 and the 9',10' carbon-carbon double bond. Through its function in carotenoids metabolism regulates oxidative stress and the production of important signaling molecules. In Pongo abelii (Sumatran orangutan), this protein is Carotenoid-cleaving dioxygenase, mitochondrial.